A 382-amino-acid chain; its full sequence is Succinyl-diaminopimelate desuccinylase (382 aa).

H70 serves as a coordination point for Zn(2+). D72 is a catalytic residue. D103 contributes to the Zn(2+) binding site. E137 serves as the catalytic Proton acceptor. The Zn(2+) site is built by E138, E166, and H355.

It belongs to the peptidase M20A family. DapE subfamily. In terms of assembly, homodimer. Zn(2+) serves as cofactor. Requires Co(2+) as cofactor.

It carries out the reaction N-succinyl-(2S,6S)-2,6-diaminopimelate + H2O = (2S,6S)-2,6-diaminopimelate + succinate. The protein operates within amino-acid biosynthesis; L-lysine biosynthesis via DAP pathway; LL-2,6-diaminopimelate from (S)-tetrahydrodipicolinate (succinylase route): step 3/3. Catalyzes the hydrolysis of N-succinyl-L,L-diaminopimelic acid (SDAP), forming succinate and LL-2,6-diaminopimelate (DAP), an intermediate involved in the bacterial biosynthesis of lysine and meso-diaminopimelic acid, an essential component of bacterial cell walls. In Paracoccus denitrificans (strain Pd 1222), this protein is Succinyl-diaminopimelate desuccinylase.